The primary structure comprises 182 residues: Putative manganese efflux pump MntP 2 (182 aa).

6 helical membrane-spanning segments follow: residues 2–22 (IELT…SIAL), 37–57 (AGGF…YLGV), 63–83 (IGGI…LKMI), 104–123 (LLLL…LTLT), 127–149 (LPLW…GGVH), and 162–182 (AEYL…IEHS).

This sequence belongs to the MntP (TC 9.B.29) family.

The protein localises to the cell inner membrane. Its function is as follows. Probably functions as a manganese efflux pump. The sequence is that of Putative manganese efflux pump MntP 2 from Wolinella succinogenes (strain ATCC 29543 / DSM 1740 / CCUG 13145 / JCM 31913 / LMG 7466 / NCTC 11488 / FDC 602W) (Vibrio succinogenes).